The chain runs to 92 residues: Small ribosomal subunit protein uS19 (92 aa).

This sequence belongs to the universal ribosomal protein uS19 family.

Protein S19 forms a complex with S13 that binds strongly to the 16S ribosomal RNA. The sequence is that of Small ribosomal subunit protein uS19 from Paracidovorax citrulli (strain AAC00-1) (Acidovorax citrulli).